The sequence spans 171 residues: Inosine/xanthosine triphosphatase (171 aa).

Position 8–13 (8–13) interacts with substrate; the sequence is TTNPAK. Glutamate 38 and glutamine 68 together coordinate Mg(2+).

This sequence belongs to the YjjX NTPase family. Homodimer. The cofactor is Mg(2+). Mn(2+) serves as cofactor.

The enzyme catalyses XTP + H2O = XDP + phosphate + H(+). It carries out the reaction ITP + H2O = IDP + phosphate + H(+). Phosphatase that hydrolyzes non-canonical purine nucleotides such as XTP and ITP to their respective diphosphate derivatives. Probably excludes non-canonical purines from DNA/RNA precursor pool, thus preventing their incorporation into DNA/RNA and avoiding chromosomal lesions. This chain is Inosine/xanthosine triphosphatase (yjjX), found in Salmonella typhimurium (strain LT2 / SGSC1412 / ATCC 700720).